Consider the following 158-residue polypeptide: Cyclic pyranopterin monophosphate synthase (158 aa).

Residues 75-77 and 113-114 contribute to the substrate site; these read LCH and ME. Aspartate 128 is a catalytic residue.

The protein belongs to the MoaC family. In terms of assembly, homohexamer; trimer of dimers.

It catalyses the reaction (8S)-3',8-cyclo-7,8-dihydroguanosine 5'-triphosphate = cyclic pyranopterin phosphate + diphosphate. The protein operates within cofactor biosynthesis; molybdopterin biosynthesis. Catalyzes the conversion of (8S)-3',8-cyclo-7,8-dihydroguanosine 5'-triphosphate to cyclic pyranopterin monophosphate (cPMP). In Ralstonia pickettii (strain 12J), this protein is Cyclic pyranopterin monophosphate synthase.